We begin with the raw amino-acid sequence, 199 residues long: ATP-dependent Clp protease proteolytic subunit (199 aa).

Ser-97 serves as the catalytic Nucleophile. His-122 is a catalytic residue.

This sequence belongs to the peptidase S14 family. Fourteen ClpP subunits assemble into 2 heptameric rings which stack back to back to give a disk-like structure with a central cavity, resembling the structure of eukaryotic proteasomes.

It is found in the cytoplasm. It carries out the reaction Hydrolysis of proteins to small peptides in the presence of ATP and magnesium. alpha-casein is the usual test substrate. In the absence of ATP, only oligopeptides shorter than five residues are hydrolyzed (such as succinyl-Leu-Tyr-|-NHMec, and Leu-Tyr-Leu-|-Tyr-Trp, in which cleavage of the -Tyr-|-Leu- and -Tyr-|-Trp bonds also occurs).. Its function is as follows. Cleaves peptides in various proteins in a process that requires ATP hydrolysis. Has a chymotrypsin-like activity. Plays a major role in the degradation of misfolded proteins. The protein is ATP-dependent Clp protease proteolytic subunit of Geobacter sulfurreducens (strain ATCC 51573 / DSM 12127 / PCA).